Consider the following 1243-residue polypeptide: Zinc finger protein ZFAT (1243 aa).

The C2H2-type 1 zinc-finger motif lies at 12 to 35 (FMCKCCNLFSPNQSELLSHVSEKH). Disordered regions lie at residues 51–116 (PLST…PSSL) and 147–189 (GEAG…GKEA). The segment covering 70–81 (MKRKRGRPKGST) has biased composition (basic residues). Residues 116-141 (LECSKCCRKFSNTRQLRKHICIIVLN) form a C2H2-type 2; degenerate zinc finger. Over residues 156 to 189 (ELEKKCKEDDREKASKRPRSQKTEKVQKISGKEA) the composition is skewed to basic and acidic residues. 7 C2H2-type zinc fingers span residues 271-293 (FTCE…LRIH), 299-321 (YKCP…LRKH), 326-349 (FACD…ERVH), 354-377 (QHCR…RDAH), 404-426 (YDCH…MLVH), 432-454 (FACE…VRKH), and 458-481 (YVCA…KEVH). Residues Cys-273, Cys-276, His-289, His-293, Cys-301, Cys-304, His-317, His-321, Cys-328, Cys-331, His-344, His-349, Cys-356, Cys-359, His-372, His-377, Cys-406, Cys-409, His-422, and His-426 each contribute to the Zn(2+) site. Cys-460, Cys-463, His-476, and His-481 together coordinate Zn(2+). Disordered regions lie at residues 534–570 (EACP…AEST), 603–625 (TSSA…SSVQ), and 638–705 (AQSA…CKAA). The segment covering 610–620 (AAPEKPPDMQH) has biased composition (basic and acidic residues). Residues 638–650 (AQSAGSDQESHGA) show a composition bias toward polar residues. 10 C2H2-type zinc fingers span residues 742–764 (LECE…VRTH), 770–793 (YYCS…IQKH), 798–822 (LKCP…LKVH), 830–853 (YSCP…KTNH), 880–903 (MKCP…IWAH), 909–931 (FKCS…MNRH), 937–959 (HLCD…KLLH), 966–988 (FKCT…MEQH), 994–1017 (FRCA…NRKH), and 1041–1064 (LKCP…KNKH). Cys-772, Cys-775, His-788, His-793, Cys-800, Cys-805, His-818, His-822, Cys-832, Cys-835, His-848, His-853, Cys-882, Cys-885, His-899, His-903, Cys-911, Cys-914, His-927, His-931, Cys-939, Cys-942, His-955, and Leu-958 together coordinate Zn(2+).

In terms of tissue distribution, isoform 1 is strongly expressed in placenta, spleen, kidney, testis and peripheral blood leukocytes. Expressed in CD4+ and CD8+ T-cells, CD19+ B-cells and CB14+ monocytes. Isoform 3 is strongly expressed in placenta, ovary, tonsil, CD19+ B-cells and CD14+ monocytes.

It localises to the nucleus. It is found in the cytoplasm. The protein localises to the cytosol. In terms of biological role, may be involved in transcriptional regulation. Overexpression causes down-regulation of a number of genes involved in the immune response. Some genes are also up-regulated. The chain is Zinc finger protein ZFAT (ZFAT) from Homo sapiens (Human).